A 392-amino-acid chain; its full sequence is Succinyl-diaminopimelate desuccinylase (392 aa).

His78 is a Zn(2+) binding site. Asp80 is an active-site residue. Asp110 contacts Zn(2+). The active-site Proton acceptor is Glu145. Residues Glu146, Glu174, and His363 each coordinate Zn(2+).

This sequence belongs to the peptidase M20A family. DapE subfamily. Homodimer. Requires Zn(2+) as cofactor. It depends on Co(2+) as a cofactor.

The enzyme catalyses N-succinyl-(2S,6S)-2,6-diaminopimelate + H2O = (2S,6S)-2,6-diaminopimelate + succinate. It participates in amino-acid biosynthesis; L-lysine biosynthesis via DAP pathway; LL-2,6-diaminopimelate from (S)-tetrahydrodipicolinate (succinylase route): step 3/3. Catalyzes the hydrolysis of N-succinyl-L,L-diaminopimelic acid (SDAP), forming succinate and LL-2,6-diaminopimelate (DAP), an intermediate involved in the bacterial biosynthesis of lysine and meso-diaminopimelic acid, an essential component of bacterial cell walls. The sequence is that of Succinyl-diaminopimelate desuccinylase from Methylobacterium radiotolerans (strain ATCC 27329 / DSM 1819 / JCM 2831 / NBRC 15690 / NCIMB 10815 / 0-1).